A 206-amino-acid chain; its full sequence is MPKVDLFNQNGEKVGDLQLADSVFGVEVNTYAMHQVVKALLANKRQGTQSAKTRAEVSGGGIKPWRQKGTGRARQGSIRAPQWIHGGVVFAPKPRDYRMSIPKSMKKVAIKSALTSKVNENLMVVVDEIKLETPKTKEVVKMLNSFNAKKTLIITNNAEENVYKSARNIEGVQIIPVNNINVYDVLKYDKVVITKDAVSKIEEVYA.

Positions 47 to 75 are disordered; the sequence is GTQSAKTRAEVSGGGIKPWRQKGTGRARQ.

It belongs to the universal ribosomal protein uL4 family. As to quaternary structure, part of the 50S ribosomal subunit.

In terms of biological role, one of the primary rRNA binding proteins, this protein initially binds near the 5'-end of the 23S rRNA. It is important during the early stages of 50S assembly. It makes multiple contacts with different domains of the 23S rRNA in the assembled 50S subunit and ribosome. Functionally, forms part of the polypeptide exit tunnel. The polypeptide is Large ribosomal subunit protein uL4 (Clostridium botulinum (strain ATCC 19397 / Type A)).